A 166-amino-acid chain; its full sequence is MKVVQGDYRGEGLKIAVVVPRFNDLVTSKLLEGALDGLKRHGVSDENITVVRIPGSMEAIYTLKRLLDLGVHDAIIVLGAVIRGETYHFNVVANEIGKAVAQFNMNSDVPIVFGVLTTDTLEQALNRAGAKSGNKGFEAAMVAIEMANLRKKLRRDFLEPHSNSRQ.

Residues Phe22, 56-58 (SME), and 80-82 (AVI) contribute to the 5-amino-6-(D-ribitylamino)uracil site. 85–86 (ET) contacts (2S)-2-hydroxy-3-oxobutyl phosphate. His88 (proton donor) is an active-site residue. Phe113 serves as a coordination point for 5-amino-6-(D-ribitylamino)uracil. Arg127 is a (2S)-2-hydroxy-3-oxobutyl phosphate binding site.

Belongs to the DMRL synthase family.

The catalysed reaction is (2S)-2-hydroxy-3-oxobutyl phosphate + 5-amino-6-(D-ribitylamino)uracil = 6,7-dimethyl-8-(1-D-ribityl)lumazine + phosphate + 2 H2O + H(+). The protein operates within cofactor biosynthesis; riboflavin biosynthesis; riboflavin from 2-hydroxy-3-oxobutyl phosphate and 5-amino-6-(D-ribitylamino)uracil: step 1/2. Catalyzes the formation of 6,7-dimethyl-8-ribityllumazine by condensation of 5-amino-6-(D-ribitylamino)uracil with 3,4-dihydroxy-2-butanone 4-phosphate. This is the penultimate step in the biosynthesis of riboflavin. The protein is 6,7-dimethyl-8-ribityllumazine synthase of Thermotoga neapolitana (strain ATCC 49049 / DSM 4359 / NBRC 107923 / NS-E).